We begin with the raw amino-acid sequence, 385 residues long: Mannitol-1-phosphate 5-dehydrogenase (385 aa).

A3–G14 is a binding site for NAD(+).

This sequence belongs to the mannitol dehydrogenase family.

The enzyme catalyses D-mannitol 1-phosphate + NAD(+) = beta-D-fructose 6-phosphate + NADH + H(+). This is Mannitol-1-phosphate 5-dehydrogenase (mtlD) from Buchnera aphidicola subsp. Acyrthosiphon pisum (strain APS) (Acyrthosiphon pisum symbiotic bacterium).